The chain runs to 304 residues: Recombination-associated protein RdgC (304 aa).

Belongs to the RdgC family.

The protein resides in the cytoplasm. Its subcellular location is the nucleoid. May be involved in recombination. This is Recombination-associated protein RdgC from Paraburkholderia phymatum (strain DSM 17167 / CIP 108236 / LMG 21445 / STM815) (Burkholderia phymatum).